A 331-amino-acid polypeptide reads, in one-letter code: Ornithine carbamoyltransferase (331 aa).

Carbamoyl phosphate is bound by residues 55–58, Q82, R106, and 133–136; these read STRT and HPTQ. Residues N166, D230, and 234–235 each bind L-ornithine; that span reads SM. Residues 272 to 273 and R317 contribute to the carbamoyl phosphate site; that span reads CL.

Belongs to the aspartate/ornithine carbamoyltransferase superfamily. OTCase family.

It localises to the cytoplasm. The enzyme catalyses carbamoyl phosphate + L-ornithine = L-citrulline + phosphate + H(+). It participates in amino-acid biosynthesis; L-arginine biosynthesis; L-arginine from L-ornithine and carbamoyl phosphate: step 1/3. In terms of biological role, reversibly catalyzes the transfer of the carbamoyl group from carbamoyl phosphate (CP) to the N(epsilon) atom of ornithine (ORN) to produce L-citrulline. This Neisseria gonorrhoeae protein is Ornithine carbamoyltransferase (argF).